Consider the following 358-residue polypeptide: Psilocybin cluster transcription regulator (358 aa).

2 disordered regions span residues 1 to 40 and 62 to 212; these read MAPA…IAGM and SGGK…RRRR. Over residues 18–29 the composition is skewed to pro residues; that stretch reads PPAPGAPAPANA. Residues 79–91 show a composition bias toward polar residues; that stretch reads QTLSNLAQAQPYG. A compositionally biased stretch (low complexity) spans 179-190; it reads PTTGRRGGRSAT. Over residues 195 to 209 the composition is skewed to basic and acidic residues; that stretch reads EWSRQRKDNHKEVER. Residues 199–212 are basic motif; the sequence is QRKDNHKEVERRRR. One can recognise a bHLH domain in the interval 199–249; the sequence is QRKDNHKEVERRRRGNINEGINELGRIVPSGSGEKAKGAILSRAVQYIHHL. The interval 213 to 249 is helix-loop-helix motif; the sequence is GNINEGINELGRIVPSGSGEKAKGAILSRAVQYIHHL. Residues 264–306 adopt a coiled-coil conformation; that stretch reads KLLMDQAMGDLQAQLEEVKRLWEEERMARTRLEAELEVLRNMN. The disordered stretch occupies residues 308–358; that stretch reads VNAGSAPASKDESAAGTKRRSTDGAEAATAATESSTANAEGERDGKRQRTE. Over residues 331–346 the composition is skewed to low complexity; that stretch reads GAEAATAATESSTANA. The span at 347–358 shows a compositional bias: basic and acidic residues; sequence EGERDGKRQRTE.

It is found in the nucleus. In terms of biological role, transcription factor that may regulate the expression of the gene cluster that mediates the biosynthesis of psilocybin, a psychotropic tryptamine-derived natural product. This Psilocybe cubensis (Psychedelic mushroom) protein is Psilocybin cluster transcription regulator.